The primary structure comprises 626 residues: Serine/threonine-protein kinase ATG1a (626 aa).

Residues 10-268 (YALGPRIGSG…FREFFNHMFL (259 aa)) enclose the Protein kinase domain. Residues 16–24 (IGSGSFAVV) and Lys39 contribute to the ATP site. The active-site Proton acceptor is Asp132. Residues 288 to 308 (KSLLPSAQPSTSTNRFKSSAE) are compositionally biased toward polar residues. The segment at 288–347 (KSLLPSAQPSTSTNRFKSSAENVHKHGSSSSASNSQISMPHTSFEKTRKDTEGQCSSNQS) is disordered. Low complexity predominate over residues 315-325 (SSSSASNSQIS). The span at 330–339 (SFEKTRKDTE) shows a compositional bias: basic and acidic residues. The short motif at 360–363 (YVLV) is the AIM (Atg8-family-interacting motif) element.

Belongs to the protein kinase superfamily. Ser/Thr protein kinase family. In terms of assembly, interacts with ATG13A. Interacts with ATG8E. Binds to ATG8E on autophagic vesicles. In terms of processing, phosphorylated during nutrient starvation. Dephosphorylated in nutrient-rich conditions.

It is found in the cytoplasmic vesicle. Its subcellular location is the autophagosome. Serine/threonine protein kinase involved in autophagy in a nutritional condition-dependent manner. The ATG1-ATG13 protein kinase complex regulates downstream events required for autophagosome enclosure and/or vacuolar delivery. Becomes a target of autophagy under nutrient starvation. Connects autophagy to plant nutritional status. This chain is Serine/threonine-protein kinase ATG1a, found in Arabidopsis thaliana (Mouse-ear cress).